The following is a 578-amino-acid chain: A-type ATP synthase subunit A (578 aa).

G228–T235 is a binding site for ATP.

It belongs to the ATPase alpha/beta chains family. Has multiple subunits with at least A(3), B(3), C, D, E, F, H, I and proteolipid K(x).

The protein resides in the cell membrane. It catalyses the reaction ATP + H2O + 4 H(+)(in) = ADP + phosphate + 5 H(+)(out). In terms of biological role, produces ATP from ADP in the presence of a proton gradient across the membrane. The archaeal alpha chain is a catalytic subunit. Functionally, component of the A-type ATP synthase that produces ATP from ADP in the presence of a proton gradient across the membrane. The A chain is the catalytic subunit. The polypeptide is A-type ATP synthase subunit A (Methanosarcina barkeri).